A 133-amino-acid chain; its full sequence is Large ribosomal subunit protein bL20 (133 aa).

The protein belongs to the bacterial ribosomal protein bL20 family.

Its function is as follows. Binds directly to 23S ribosomal RNA and is necessary for the in vitro assembly process of the 50S ribosomal subunit. It is not involved in the protein synthesizing functions of that subunit. The protein is Large ribosomal subunit protein bL20 of Mesorhizobium japonicum (strain LMG 29417 / CECT 9101 / MAFF 303099) (Mesorhizobium loti (strain MAFF 303099)).